A 310-amino-acid polypeptide reads, in one-letter code: Vomeronasal type-1 receptor 53 (310 aa).

Residues 1-20 (MNKANLLHTDINLKITLFSE) lie on the Extracellular side of the membrane. The chain crosses the membrane as a helical span at residues 21-41 (VSVGISANSILIFAHLCMLLG). Topologically, residues 42 to 50 (ENRPKPIDL) are cytoplasmic. Residues 51-71 (YIAFFSLTQLMLLITMGLIAV) traverse the membrane as a helical segment. The Extracellular portion of the chain corresponds to 72–93 (DMFMPWGRWDSTTCQSLIYLHR). Cysteine 85 and cysteine 172 are disulfide-bonded. Residues 94–114 (LLRGLTLSATCLLNVLWTITL) form a helical membrane-spanning segment. Residues 115–134 (SPRSSCLTKFKHKSLQHISC) are Cytoplasmic-facing. The chain crosses the membrane as a helical span at residues 135–155 (AFLFLCVLYMSFNSHLFISII). The Extracellular segment spans residues 156 to 183 (AYPNLTLENFMYVTQSCSLIPLSYFRKS). An N-linked (GlcNAc...) asparagine glycan is attached at asparagine 159. Residues 184-204 (MFSIPMAIREALLIGLMALSG) traverse the membrane as a helical segment. Topologically, residues 205–238 (GYMVAHLWRHKKQAQHLHRTSLSSKASPEQRATR) are cytoplasmic. A helical membrane pass occupies residues 239–259 (TIMLLMSFFVVLYILDLVIFH). Over 260–268 (SRMKFKDGS) the chain is Extracellular. The chain crosses the membrane as a helical span at residues 269-289 (ILYGVQIIVSHSYATVSPFVF). The Cytoplasmic segment spans residues 290-310 (ICTEKRITNFLRSMCGRIVNI).

It belongs to the G-protein coupled receptor 1 family.

The protein localises to the cell membrane. Putative pheromone receptor implicated in the regulation of social and reproductive behavior. This chain is Vomeronasal type-1 receptor 53 (Vmn1r53), found in Mus musculus (Mouse).